Consider the following 312-residue polypeptide: Ornithine carbamoyltransferase (312 aa).

Carbamoyl phosphate-binding positions include 57–60 (STRT), Q84, R108, and 135–138 (HPCQ). Residues N166, D226, and 230 to 231 (SM) each bind L-ornithine. Carbamoyl phosphate is bound by residues 265–266 (CL) and R293.

The protein belongs to the aspartate/ornithine carbamoyltransferase superfamily. OTCase family.

The protein resides in the cytoplasm. The catalysed reaction is carbamoyl phosphate + L-ornithine = L-citrulline + phosphate + H(+). The protein operates within amino-acid biosynthesis; L-arginine biosynthesis; L-arginine from L-ornithine and carbamoyl phosphate: step 1/3. In terms of biological role, reversibly catalyzes the transfer of the carbamoyl group from carbamoyl phosphate (CP) to the N(epsilon) atom of ornithine (ORN) to produce L-citrulline. The chain is Ornithine carbamoyltransferase from Brucella suis biovar 1 (strain 1330).